Reading from the N-terminus, the 287-residue chain is Pantothenate synthetase (287 aa).

30–37 (MGNLHDGH) is an ATP binding site. His37 acts as the Proton donor in catalysis. Position 61 (Gln61) interacts with (R)-pantoate. Gln61 is a binding site for beta-alanine. Position 148–151 (148–151 (GQKD)) interacts with ATP. Gln154 lines the (R)-pantoate pocket. ATP contacts are provided by residues Ile177 and 185 to 188 (LSSR).

Belongs to the pantothenate synthetase family. Homodimer.

It is found in the cytoplasm. The enzyme catalyses (R)-pantoate + beta-alanine + ATP = (R)-pantothenate + AMP + diphosphate + H(+). The protein operates within cofactor biosynthesis; (R)-pantothenate biosynthesis; (R)-pantothenate from (R)-pantoate and beta-alanine: step 1/1. Catalyzes the condensation of pantoate with beta-alanine in an ATP-dependent reaction via a pantoyl-adenylate intermediate. In Psychrobacter cryohalolentis (strain ATCC BAA-1226 / DSM 17306 / VKM B-2378 / K5), this protein is Pantothenate synthetase.